Here is a 230-residue protein sequence, read N- to C-terminus: Phosphoribosylaminoimidazole-succinocarboxamide synthase (230 aa).

Belongs to the SAICAR synthetase family.

It carries out the reaction 5-amino-1-(5-phospho-D-ribosyl)imidazole-4-carboxylate + L-aspartate + ATP = (2S)-2-[5-amino-1-(5-phospho-beta-D-ribosyl)imidazole-4-carboxamido]succinate + ADP + phosphate + 2 H(+). It functions in the pathway purine metabolism; IMP biosynthesis via de novo pathway; 5-amino-1-(5-phospho-D-ribosyl)imidazole-4-carboxamide from 5-amino-1-(5-phospho-D-ribosyl)imidazole-4-carboxylate: step 1/2. This is Phosphoribosylaminoimidazole-succinocarboxamide synthase from Thermotoga petrophila (strain ATCC BAA-488 / DSM 13995 / JCM 10881 / RKU-1).